Here is a 438-residue protein sequence, read N- to C-terminus: Acyl-CoA dehydrogenase apdG (438 aa).

Belongs to the acyl-CoA dehydrogenase family. Requires FAD as cofactor.

The protein operates within secondary metabolite biosynthesis. In terms of biological role, acyl-CoA dehydrogenase; part of the gene cluster that mediates the biosynthesis of aspyridones. The polyketide-amino acid backbone preaspyridone A is first assembled by the PKS-NRPS hybrid apdA. The assembly of preaspyridone A is initiated by loading of malonyl-CoA onto apdA, followed by decarboxylation to yield the acetyl starter unit. The growing polyketide chain then elongates into a tetraketide. The adpA PKS module catalyzes three Claisen condensations, as well as beta-keto processing and methylation. Alpha-methylation step during polyketide synthesis is a prerequisite and a key checkpoint for chain transfer between PKS and NRPS modules. The downstream NRPS module contains the condensation (C), adenylation (A), and thiolation (T) domains and catalyzes the incorporation of tyrosine via the formation of the L-tyrosinyl-thioester and the amide linkage between L-tyrosinyl-thioester and the tetraketide. The bimodular assembly line is terminated with a reductase (R) domain that facilitates formation and release of the tetramic acid product. Because apdA lacks a designated enoylreductase (ER) domain, the required activity is provided the enoyl reductase apdC. ApdC appears to operate with different stereoselectivity in different PKS cycle. Combined with apdC, apdA is proposed to synthesize preaspyridone A via about 20 enzymatic steps. A number of oxidative steps performed successively by the cytochrome P450 monooxygenases apdE and apdB are required for the conversion of preaspyridone A to aspyridone A. The cytochrome P450 monooxygenase apdE is responsible for the oxidative dephenylation of preaspyridone A. Finally, the predicted FAD-dependent monooxygenase apdD and the acyl-CoA dehydrogenase apdG may be involved in the transformation of aspyridone A into aspyridone B. In Emericella nidulans (strain FGSC A4 / ATCC 38163 / CBS 112.46 / NRRL 194 / M139) (Aspergillus nidulans), this protein is Acyl-CoA dehydrogenase apdG.